We begin with the raw amino-acid sequence, 171 residues long: Adenine phosphoribosyltransferase (171 aa).

The protein belongs to the purine/pyrimidine phosphoribosyltransferase family. As to quaternary structure, homodimer.

It is found in the cytoplasm. It carries out the reaction AMP + diphosphate = 5-phospho-alpha-D-ribose 1-diphosphate + adenine. It participates in purine metabolism; AMP biosynthesis via salvage pathway; AMP from adenine: step 1/1. Catalyzes a salvage reaction resulting in the formation of AMP, that is energically less costly than de novo synthesis. This chain is Adenine phosphoribosyltransferase, found in Rhodospirillum centenum (strain ATCC 51521 / SW).